Here is a 138-residue protein sequence, read N- to C-terminus: MEQTFLMVKPDGVERGLIGEIIARIERKGFVIREMKMMQVTEELAQAHYAEHAEKPFFGELVTFLTSGPVVALRVEGEDVVTVSRMMIGKTKPTEALPGTIRGDFANTMSENVIHGSDSVESAERELGLWFQGQPLNV.

The ATP site is built by lysine 9, phenylalanine 57, arginine 85, threonine 91, arginine 102, and asparagine 112. The active-site Pros-phosphohistidine intermediate is histidine 115.

It belongs to the NDK family. Homotetramer. Mg(2+) serves as cofactor.

It is found in the cytoplasm. It catalyses the reaction a 2'-deoxyribonucleoside 5'-diphosphate + ATP = a 2'-deoxyribonucleoside 5'-triphosphate + ADP. The enzyme catalyses a ribonucleoside 5'-diphosphate + ATP = a ribonucleoside 5'-triphosphate + ADP. In terms of biological role, major role in the synthesis of nucleoside triphosphates other than ATP. The ATP gamma phosphate is transferred to the NDP beta phosphate via a ping-pong mechanism, using a phosphorylated active-site intermediate. This chain is Nucleoside diphosphate kinase, found in Exiguobacterium sibiricum (strain DSM 17290 / CCUG 55495 / CIP 109462 / JCM 13490 / 255-15).